A 116-amino-acid polypeptide reads, in one-letter code: Small ribosomal subunit protein uS17 (116 aa).

It belongs to the universal ribosomal protein uS17 family. In terms of assembly, part of the 30S ribosomal subunit.

One of the primary rRNA binding proteins, it binds specifically to the 5'-end of 16S ribosomal RNA. In Pyrococcus horikoshii (strain ATCC 700860 / DSM 12428 / JCM 9974 / NBRC 100139 / OT-3), this protein is Small ribosomal subunit protein uS17.